The sequence spans 276 residues: Mitochondrial outer membrane protein porin 6 (276 aa).

It belongs to the eukaryotic mitochondrial porin (TC 1.B.8.1) family.

It localises to the mitochondrion outer membrane. Forms a channel through the mitochondrial outer membrane that allows diffusion of small hydrophilic molecules. The channel adopts an open conformation at low or zero membrane potential and a closed conformation at potentials above 30-40 mV. The open state has a weak anion selectivity whereas the closed state is cation-selective. The polypeptide is Mitochondrial outer membrane protein porin 6 (VDAC6) (Oryza sativa subsp. japonica (Rice)).